Reading from the N-terminus, the 175-residue chain is Bifunctional protein PyrR (175 aa).

Residues 40–41 (TR), 102–110 (DDVLYTGRT), R135, and V159 each bind substrate. Residues 98–110 (VIIIDDVLYTGRT) carry the PRPP-binding motif.

Belongs to the purine/pyrimidine phosphoribosyltransferase family. PyrR subfamily. As to quaternary structure, homodimer and homohexamer; in equilibrium.

It catalyses the reaction UMP + diphosphate = 5-phospho-alpha-D-ribose 1-diphosphate + uracil. Functionally, regulates transcriptional attenuation of the pyrimidine nucleotide (pyr) operon by binding in a uridine-dependent manner to specific sites on pyr mRNA. This disrupts an antiterminator hairpin in the RNA and favors formation of a downstream transcription terminator, leading to a reduced expression of downstream genes. Its function is as follows. Also displays a weak uracil phosphoribosyltransferase activity which is not physiologically significant. The polypeptide is Bifunctional protein PyrR (Staphylococcus haemolyticus (strain JCSC1435)).